Consider the following 355-residue polypeptide: 3-dehydroquinate synthase (355 aa).

Residues 106–110, 130–131, Lys143, and Lys152 contribute to the NAD(+) site; these read GVVGD and TS. Positions 185, 246, and 262 each coordinate Zn(2+).

It belongs to the sugar phosphate cyclases superfamily. Dehydroquinate synthase family. Requires Co(2+) as cofactor. Zn(2+) serves as cofactor. The cofactor is NAD(+).

It localises to the cytoplasm. It carries out the reaction 7-phospho-2-dehydro-3-deoxy-D-arabino-heptonate = 3-dehydroquinate + phosphate. It functions in the pathway metabolic intermediate biosynthesis; chorismate biosynthesis; chorismate from D-erythrose 4-phosphate and phosphoenolpyruvate: step 2/7. Its function is as follows. Catalyzes the conversion of 3-deoxy-D-arabino-heptulosonate 7-phosphate (DAHP) to dehydroquinate (DHQ). This chain is 3-dehydroquinate synthase, found in Latilactobacillus sakei subsp. sakei (strain 23K) (Lactobacillus sakei subsp. sakei).